The following is a 721-amino-acid chain: MATILFKVIMMKELILLEEGWSVMKTGVAKLQRILEDLSEPPFDPGQYINLYTIIYDMCLQQPPNDYSQELYNKYRGVVDHYNKETVLPSMRERHGEYMLRELVKRWANHKILVRWLSRFCFYLDRFYVARRGLPTLNDVGFTSFHDLVYQEIQSEAKDVLLALIHKEREGEQIDRTLVKNVIDVYCGNGVGQMVIYEEDFESFLLQDTASYYSRKASRWSQEDSCPDYMLKAEECLKLEKERVTNYLHSTTEPKLVEKVQNELLVVVAKQLIENEHSGCLALLRDDKMGDLSRMYRLYRLIPQGLEPIADLFKQHVTAEGNALIKQAADAATNQDASASQVLVRKEIELHDKYMVYVDECFQKHSLFHKLLKEAFEVFCNKTVAGASSAEILATYCDNILKTRGGSEKLSDEATEITLEKVVNLLVYISDKDLFAEFYRKKQARRLLFDRSGIMKEVTDITLARELQTNFVDYLSANMTTKLGIDFTVTVLTTGFWPSYKTTDLNLPTEMVNCVEAFKVFYGTKTNSRRLSWIYSLGTCHILGKFEKKTMELVVSTYQAAVLLLFNNAERLSYTEISEQLNLSHEDLVRLLHSLSCLKYKILIKEPMSRTISKTDTFEFNSKFTDKMRKIRVPLPPMDERKKVVEDVDKDRRYAIDAALVRIMKSRKVLAHQQLVSECVEHLSKMFKPDIKMIKKRIEDLINRDYLERDTENANTFKYVA.

A Cullin neddylation domain is found at 651 to 713; it reads DRRYAIDAAL…RDYLERDTEN (63 aa).

This sequence belongs to the cullin family.

The sequence is that of Putative cullin-like protein 1 from Arabidopsis thaliana (Mouse-ear cress).